A 590-amino-acid chain; its full sequence is UvrABC system protein C (590 aa).

The GIY-YIG domain maps to 14-91 (DQPGCYLMKD…IKKYDPKYNV (78 aa)). The UVR domain maps to 196 to 231 (NEIKKELEAKMAEAAEKLEFERAKEFRDQLAHIEST).

The protein belongs to the UvrC family. As to quaternary structure, interacts with UvrB in an incision complex.

The protein resides in the cytoplasm. The UvrABC repair system catalyzes the recognition and processing of DNA lesions. UvrC both incises the 5' and 3' sides of the lesion. The N-terminal half is responsible for the 3' incision and the C-terminal half is responsible for the 5' incision. The sequence is that of UvrABC system protein C from Bacillus velezensis (strain DSM 23117 / BGSC 10A6 / LMG 26770 / FZB42) (Bacillus amyloliquefaciens subsp. plantarum).